A 245-amino-acid polypeptide reads, in one-letter code: Uridylate kinase (245 aa).

Residue 18 to 21 participates in ATP binding; sequence KLSG. Residue Gly60 coordinates UMP. Residues Gly61 and Arg65 each contribute to the ATP site. UMP-binding positions include Asp80 and 141–148; that span reads TGNPFFTT. Residues Thr168, Tyr174, and Asp177 each coordinate ATP.

Belongs to the UMP kinase family. Homohexamer.

It localises to the cytoplasm. The catalysed reaction is UMP + ATP = UDP + ADP. It functions in the pathway pyrimidine metabolism; CTP biosynthesis via de novo pathway; UDP from UMP (UMPK route): step 1/1. Inhibited by UTP. Catalyzes the reversible phosphorylation of UMP to UDP. This is Uridylate kinase from Pseudomonas paraeruginosa (strain DSM 24068 / PA7) (Pseudomonas aeruginosa (strain PA7)).